The sequence spans 320 residues: Putative sporulation hydrolase CotR (320 aa).

In terms of domain architecture, PNPLA spans 7-182 (MTFDGGGTLG…VATNPSTASI (176 aa)). The GXGXXG motif lies at 11-16 (GGGTLG). Positions 42–46 (GNSIG) match the GXSXG motif. The active-site Nucleophile is S44. D169 serves as the catalytic Proton acceptor.

It localises to the spore coat. This is Putative sporulation hydrolase CotR (cotR) from Bacillus subtilis (strain 168).